Reading from the N-terminus, the 368-residue chain is tRNA 2-selenouridine synthase (368 aa).

The region spanning 15-138 (FLNQHPIMDV…MRQYLIGVIE (124 aa)) is the Rhodanese domain. The active-site S-selanylcysteine intermediate is cysteine 98.

The protein belongs to the SelU family. As to quaternary structure, monomer.

It carries out the reaction 5-methylaminomethyl-2-thiouridine(34) in tRNA + selenophosphate + (2E)-geranyl diphosphate + H2O + H(+) = 5-methylaminomethyl-2-selenouridine(34) in tRNA + (2E)-thiogeraniol + phosphate + diphosphate. It catalyses the reaction 5-methylaminomethyl-2-thiouridine(34) in tRNA + (2E)-geranyl diphosphate = 5-methylaminomethyl-S-(2E)-geranyl-thiouridine(34) in tRNA + diphosphate. The catalysed reaction is 5-methylaminomethyl-S-(2E)-geranyl-thiouridine(34) in tRNA + selenophosphate + H(+) = 5-methylaminomethyl-2-(Se-phospho)selenouridine(34) in tRNA + (2E)-thiogeraniol. The enzyme catalyses 5-methylaminomethyl-2-(Se-phospho)selenouridine(34) in tRNA + H2O = 5-methylaminomethyl-2-selenouridine(34) in tRNA + phosphate. Involved in the post-transcriptional modification of the uridine at the wobble position (U34) of tRNA(Lys), tRNA(Glu) and tRNA(Gln). Catalyzes the conversion of 2-thiouridine (S2U-RNA) to 2-selenouridine (Se2U-RNA). Acts in a two-step process involving geranylation of 2-thiouridine (S2U) to S-geranyl-2-thiouridine (geS2U) and subsequent selenation of the latter derivative to 2-selenouridine (Se2U) in the tRNA chain. The protein is tRNA 2-selenouridine synthase of Shewanella baltica (strain OS185).